A 294-amino-acid chain; its full sequence is Undecaprenyl-diphosphatase (294 aa).

A run of 6 helical transmembrane segments spans residues 39–59, 93–113, 123–143, 197–217, 234–254, and 265–285; these read PGAA…ILYF, TQMG…GLLF, NLWI…VVDA, VSFL…AVSA, ATIA…IGFL, and FAIY…CGVL.

This sequence belongs to the UppP family.

It localises to the cell membrane. It catalyses the reaction di-trans,octa-cis-undecaprenyl diphosphate + H2O = di-trans,octa-cis-undecaprenyl phosphate + phosphate + H(+). Functionally, catalyzes the dephosphorylation of undecaprenyl diphosphate (UPP). Confers resistance to bacitracin. The chain is Undecaprenyl-diphosphatase from Bifidobacterium adolescentis (strain ATCC 15703 / DSM 20083 / NCTC 11814 / E194a).